Consider the following 342-residue polypeptide: Spore photoproduct lyase (342 aa).

Positions 77–305 (SKPSAEYAIP…EEKRRYKWGR (229 aa)) constitute a Radical SAM core domain. Residues Cys91, Cys95, and Cys98 each coordinate [4Fe-4S] cluster. The H-T-H motif DNA-binding region spans 218 to 235 (EAAVKVAKAGYPLGFIVA).

Belongs to the radical SAM superfamily. SPL family. Monomer or homodimer. It depends on [4Fe-4S] cluster as a cofactor. Requires S-adenosyl-L-methionine as cofactor.

It carries out the reaction (5R)-5,6-dihydro-5-(thymidin-7-yl)thymidine in DNA = a thymidine dimer in DNA. Involved in repair of UV radiation-induced DNA damage during spore germination. Can repair thymine dimer 5-thyminyl-5,6-dihydrothymine (known as spore photoproduct (SP)) by in situ monomerization of SP to two thymines. The sequence is that of Spore photoproduct lyase (splB) from Bacillus subtilis (strain 168).